The following is a 430-amino-acid chain: Citrate synthase (430 aa).

Catalysis depends on residues H305 and D363.

It belongs to the citrate synthase family. Homohexamer.

It catalyses the reaction oxaloacetate + acetyl-CoA + H2O = citrate + CoA + H(+). The protein operates within carbohydrate metabolism; tricarboxylic acid cycle; isocitrate from oxaloacetate: step 1/2. With respect to regulation, allosterically inhibited by NADH. The polypeptide is Citrate synthase (gltA) (Coxiella burnetii (strain RSA 493 / Nine Mile phase I)).